A 510-amino-acid polypeptide reads, in one-letter code: MATGRGRILQQHWLGLQTLRGPSRGGGAARGRARAFGCRKGPGVKLSAGSAALRCHAGGGQHWESSFSCCSGFLDGMPSEILLKIFSYLDAVSLLCTGCVSRRFYHLANDNFIWIGIYSTAFSPARSNWKFNSVEKIAMSMSFLSVQDKEAGYWKKEYITKQIASVKAALADILKPVNPYTGLPVKTKEALRIFGLGWAIILKEKGGKEYIMEHVDLSINDTSVTVIWYGKKWPCLASLSTLDLCGMTPVFTDWYKTPTKHRLRWHSLIAKYNLSHLTISTMIGCDRLIRIFCLHPGLLVGVWKKEEELAFVMANLHFHHLVERSTLGSATIPYELPPHSPFLDDSPEYGLHGYQLHVDLHSGGVFYLCGTFRNLFTKRGNIENGHVKLIVIHLKNNREHLPLIGKVGLSWKTDIFDGCIKSCSMMDVTLLDEHGKPFWCFSSPVCLRSPATPSDSSSFLGQTYNVDYVDAEGRVHVELVWIRETEEYLIVNLVLYLSIAKINHWFGTEY.

The F-box domain occupies Met77–Ile117.

Directly interacts with SKP1 and CUL1.

In terms of biological role, substrate-recognition component of the SCF (SKP1-CUL1-F-box protein)-type E3 ubiquitin ligase complex. The polypeptide is F-box only protein 15 (FBXO15) (Homo sapiens (Human)).